A 439-amino-acid chain; its full sequence is Sorting nexin-31 (439 aa).

The 109-residue stretch at 1-109 (MKMHFCIPVS…EFLTLVQLHT (109 aa)) folds into the PX domain. The segment at 384–409 (TEQSPEMQIEVPEQGRSKKHPSQPSQ) is disordered.

This sequence belongs to the sorting nexin family. Interacts with CCDC22, CCDC93, VPS26C and VPS35L, associates with the retriever and CCC complexes.

Functionally, may be involved in protein trafficking. The protein is Sorting nexin-31 (Snx31) of Mus musculus (Mouse).